We begin with the raw amino-acid sequence, 390 residues long: 3,5-dihydroxybiphenyl synthase (390 aa).

Cys161 is an active-site residue.

The protein belongs to the thiolase-like superfamily. Chalcone/stilbene synthases family. In terms of assembly, homodimer.

It carries out the reaction benzoyl-CoA + 3 malonyl-CoA + 3 H(+) = biphenyl-3,5-diol + 4 CO2 + 4 CoA. Type III polyketide synthase involved in the biosynthesis of the phytoalexins bisphenyls and dibenzofurans. Can also use salicoyl-CoA and malonyl-CoA to produce a diketide intermediate yielding 4-hydroxycoumarin after cyclization and enolization. Can also use m-hydroxybenzoyl-CoA as substrate, producing m-hydroxybenzoyl diacetic acid lactone as a derailment product. No activity with p-hydroxybenzoyl-CoA, CoA-linked cinnamic acids or acetyl-CoA. The sequence is that of 3,5-dihydroxybiphenyl synthase (BIS1) from Sorbus aucuparia (European mountain ash).